Here is a 746-residue protein sequence, read N- to C-terminus: Polyribonucleotide nucleotidyltransferase (746 aa).

2 residues coordinate Mg(2+): D519 and D525. One can recognise a KH domain in the interval P585–I644. Residues G656–V728 form the S1 motif domain.

It belongs to the polyribonucleotide nucleotidyltransferase family. The cofactor is Mg(2+).

Its subcellular location is the cytoplasm. The enzyme catalyses RNA(n+1) + phosphate = RNA(n) + a ribonucleoside 5'-diphosphate. Involved in mRNA degradation. Catalyzes the phosphorolysis of single-stranded polyribonucleotides processively in the 3'- to 5'-direction. In Arthrobacter sp. (strain FB24), this protein is Polyribonucleotide nucleotidyltransferase.